The following is a 427-amino-acid chain: Glutamate-1-semialdehyde 2,1-aminomutase (427 aa).

Lys267 carries the N6-(pyridoxal phosphate)lysine modification.

It belongs to the class-III pyridoxal-phosphate-dependent aminotransferase family. HemL subfamily. In terms of assembly, homodimer. Pyridoxal 5'-phosphate serves as cofactor.

It is found in the cytoplasm. It carries out the reaction (S)-4-amino-5-oxopentanoate = 5-aminolevulinate. It participates in porphyrin-containing compound metabolism; protoporphyrin-IX biosynthesis; 5-aminolevulinate from L-glutamyl-tRNA(Glu): step 2/2. The sequence is that of Glutamate-1-semialdehyde 2,1-aminomutase from Citrifermentans bemidjiense (strain ATCC BAA-1014 / DSM 16622 / JCM 12645 / Bem) (Geobacter bemidjiensis).